A 550-amino-acid polypeptide reads, in one-letter code: Arginine--tRNA ligase (550 aa).

The short motif at 130–140 (ANPTGPIHIGG) is the 'HIGH' region element.

This sequence belongs to the class-I aminoacyl-tRNA synthetase family. Monomer.

It localises to the cytoplasm. It catalyses the reaction tRNA(Arg) + L-arginine + ATP = L-arginyl-tRNA(Arg) + AMP + diphosphate. The protein is Arginine--tRNA ligase of Mycobacterium ulcerans (strain Agy99).